A 590-amino-acid chain; its full sequence is Aspartate--tRNA(Asp/Asn) ligase (590 aa).

Glu175 lines the L-aspartate pocket. Positions 199–202 (QQYK) are aspartate. L-aspartate is bound by residues Arg221 and His450. 221 to 223 (RDE) is an ATP binding site. Glu484 is a binding site for ATP. Residue Arg491 participates in L-aspartate binding. 536–539 (GVDR) contributes to the ATP binding site.

Belongs to the class-II aminoacyl-tRNA synthetase family. Type 1 subfamily. Homodimer.

The protein resides in the cytoplasm. The catalysed reaction is tRNA(Asx) + L-aspartate + ATP = L-aspartyl-tRNA(Asx) + AMP + diphosphate. Functionally, aspartyl-tRNA synthetase with relaxed tRNA specificity since it is able to aspartylate not only its cognate tRNA(Asp) but also tRNA(Asn). Reaction proceeds in two steps: L-aspartate is first activated by ATP to form Asp-AMP and then transferred to the acceptor end of tRNA(Asp/Asn). This Nitrobacter hamburgensis (strain DSM 10229 / NCIMB 13809 / X14) protein is Aspartate--tRNA(Asp/Asn) ligase.